A 91-amino-acid polypeptide reads, in one-letter code: MSRTVFCEYLKQEAEGLDFQLYPGELGKRIFDNISKRAWGEWMKKQTMLVNEKKLNMMNADHRKLLEQEMVNFLFEGKDVHIEGYIPQATN.

The protein belongs to the Fe(2+)-trafficking protein family.

Functionally, could be a mediator in iron transactions between iron acquisition and iron-requiring processes, such as synthesis and/or repair of Fe-S clusters in biosynthetic enzymes. The protein is Probable Fe(2+)-trafficking protein of Mannheimia succiniciproducens (strain KCTC 0769BP / MBEL55E).